A 444-amino-acid polypeptide reads, in one-letter code: Ribosomal protein uS12 methylthiotransferase RimO (444 aa).

Residues 4 to 118 (YKIGLISLGC…IQNYIDDFFN (115 aa)) enclose the MTTase N-terminal domain. The [4Fe-4S] cluster site is built by Cys13, Cys48, Cys81, Cys155, Cys159, and Cys162. One can recognise a Radical SAM core domain in the interval 141 to 371 (TTAKHMAYIR…MSIQQNVSSK (231 aa)). The TRAM domain occupies 374 to 440 (KNKLEKVYKV…EYDLIGVVCD (67 aa)).

Belongs to the methylthiotransferase family. RimO subfamily. It depends on [4Fe-4S] cluster as a cofactor.

The protein localises to the cytoplasm. The catalysed reaction is L-aspartate(89)-[ribosomal protein uS12]-hydrogen + (sulfur carrier)-SH + AH2 + 2 S-adenosyl-L-methionine = 3-methylsulfanyl-L-aspartate(89)-[ribosomal protein uS12]-hydrogen + (sulfur carrier)-H + 5'-deoxyadenosine + L-methionine + A + S-adenosyl-L-homocysteine + 2 H(+). Its function is as follows. Catalyzes the methylthiolation of an aspartic acid residue of ribosomal protein uS12. In Clostridium novyi (strain NT), this protein is Ribosomal protein uS12 methylthiotransferase RimO.